Consider the following 224-residue polypeptide: Large ribosomal subunit protein uL11c (224 aa).

Residues 1–66 (MAQPLVAAPS…SHRRLSIVAM (66 aa)) constitute a chloroplast transit peptide. An N6,N6,N6-trimethyllysine mark is found at lysine 75 and lysine 111.

In terms of assembly, component of the chloroplast large ribosomal subunit (LSU). Mature 70S chloroplast ribosomes of higher plants consist of a small (30S) and a large (50S) subunit. The 30S small subunit contains 1 molecule of ribosomal RNA (16S rRNA) and 24 different proteins. The 50S large subunit contains 3 rRNA molecules (23S, 5S and 4.5S rRNA) and 33 different proteins.

It localises to the plastid. It is found in the chloroplast. Functionally, component of the chloroplast ribosome (chloro-ribosome), a dedicated translation machinery responsible for the synthesis of chloroplast genome-encoded proteins, including proteins of the transcription and translation machinery and components of the photosynthetic apparatus. The polypeptide is Large ribosomal subunit protein uL11c (rpl11) (Spinacia oleracea (Spinach)).